Reading from the N-terminus, the 71-residue chain is Large ribosomal subunit protein uL30 (71 aa).

Belongs to the universal ribosomal protein uL30 family. In terms of assembly, part of the 50S ribosomal subunit.

This chain is Large ribosomal subunit protein uL30, found in Borreliella burgdorferi (strain ATCC 35210 / DSM 4680 / CIP 102532 / B31) (Borrelia burgdorferi).